A 204-amino-acid polypeptide reads, in one-letter code: Guanylate kinase (204 aa).

Residues 3-181 (GTLIIITAPS…ALDDLVAVVR (179 aa)) form the Guanylate kinase-like domain. 10–17 (APSGAGKT) contacts ATP.

The protein belongs to the guanylate kinase family.

It is found in the cytoplasm. It catalyses the reaction GMP + ATP = GDP + ADP. Essential for recycling GMP and indirectly, cGMP. This Aromatoleum aromaticum (strain DSM 19018 / LMG 30748 / EbN1) (Azoarcus sp. (strain EbN1)) protein is Guanylate kinase.